The chain runs to 65 residues: Sodium channel neurotoxin MeuNaTxalpha-9 (65 aa).

In terms of domain architecture, LCN-type CS-alpha/beta spans 2–64 (RDGYIANDRN…VPIRIPGECR (63 aa)). 4 disulfide bridges follow: Cys12-Cys63, Cys16-Cys36, Cys22-Cys46, and Cys26-Cys48. At Arg64 the chain carries Arginine amide.

It belongs to the long (4 C-C) scorpion toxin superfamily. Sodium channel inhibitor family. Alpha subfamily. Expressed by the venom gland.

It is found in the secreted. In terms of biological role, alpha toxins bind voltage-independently at site-3 of sodium channels (Nav) and inhibit the inactivation of the activated channels, thereby blocking neuronal transmission. The sequence is that of Sodium channel neurotoxin MeuNaTxalpha-9 from Mesobuthus eupeus (Lesser Asian scorpion).